A 338-amino-acid polypeptide reads, in one-letter code: Legumin B (338 aa).

The tract at residues 16-162 is disordered; the sequence is SLNTKEDTAK…RQHSKGRKNG (147 aa). Basic and acidic residues predominate over residues 18-44; it reads NTKEDTAKRLRSPQDERGQIVKVEDGL. Acidic residues-rich tracts occupy residues 82 to 92 and 136 to 150; these read DEDEDEEEEEE and EEEE…EEEE. The 148-residue stretch at 174–321 folds into the Cupin type-1 domain; sequence ENIARPSRGD…AFGLRHSQVA (148 aa).

It belongs to the 11S seed storage protein (globulins) family. Hexamer; each subunit is composed of an acidic and a basic chain derived from a single precursor and linked by a disulfide bond.

In terms of biological role, this protein found in the seeds of many leguminous and non-leguminous plants is the source of sulfur-containing amino acids in seed meals. In Pisum sativum (Garden pea), this protein is Legumin B (LEGB).